We begin with the raw amino-acid sequence, 650 residues long: DNA gyrase subunit B (650 aa).

The segment covering 400–414 has biased composition (basic and acidic residues); it reads RRSQEARELTRRKSP. The disordered stretch occupies residues 400–422; the sequence is RRSQEARELTRRKSPFDSGSLPG. The Toprim domain occupies 435 to 549; it reads SELYIVEGDS…QGNIYIAQPP (115 aa). Residues Glu-441, Asp-514, and Asp-516 each coordinate Mg(2+).

Belongs to the type II topoisomerase GyrB family. In terms of assembly, heterotetramer, composed of two GyrA and two GyrB chains. In the heterotetramer, GyrA contains the active site tyrosine that forms a transient covalent intermediate with DNA, while GyrB binds cofactors and catalyzes ATP hydrolysis. Mg(2+) is required as a cofactor. Requires Mn(2+) as cofactor. It depends on Ca(2+) as a cofactor.

The protein resides in the cytoplasm. The enzyme catalyses ATP-dependent breakage, passage and rejoining of double-stranded DNA.. Its function is as follows. A type II topoisomerase that negatively supercoils closed circular double-stranded (ds) DNA in an ATP-dependent manner to modulate DNA topology and maintain chromosomes in an underwound state. Negative supercoiling favors strand separation, and DNA replication, transcription, recombination and repair, all of which involve strand separation. Also able to catalyze the interconversion of other topological isomers of dsDNA rings, including catenanes and knotted rings. Type II topoisomerases break and join 2 DNA strands simultaneously in an ATP-dependent manner. This chain is DNA gyrase subunit B, found in Mycoplasma pneumoniae (strain ATCC 29342 / M129 / Subtype 1) (Mycoplasmoides pneumoniae).